The chain runs to 190 residues: Potassium-transporting ATPase KdpC subunit (190 aa).

A helical membrane pass occupies residues 6-26 (PAVFLVLLLTLITGLLYPLLT). A disordered region spans residues 67 to 88 (GRPSATSDRPYNPLASSGSNLA). The segment covering 69–88 (PSATSDRPYNPLASSGSNLA) has biased composition (polar residues).

This sequence belongs to the KdpC family. As to quaternary structure, the system is composed of three essential subunits: KdpA, KdpB and KdpC.

The protein resides in the cell inner membrane. Functionally, part of the high-affinity ATP-driven potassium transport (or Kdp) system, which catalyzes the hydrolysis of ATP coupled with the electrogenic transport of potassium into the cytoplasm. This subunit acts as a catalytic chaperone that increases the ATP-binding affinity of the ATP-hydrolyzing subunit KdpB by the formation of a transient KdpB/KdpC/ATP ternary complex. The chain is Potassium-transporting ATPase KdpC subunit from Erwinia tasmaniensis (strain DSM 17950 / CFBP 7177 / CIP 109463 / NCPPB 4357 / Et1/99).